A 159-amino-acid chain; its full sequence is Phosphopantetheine adenylyltransferase (159 aa).

Ser-8 is a substrate binding site. ATP contacts are provided by residues Ser-8–Phe-9 and His-16. Residues Lys-40, Leu-73, and Lys-87 each contribute to the substrate site. ATP is bound by residues Gly-88–Arg-90, Glu-98, and Tyr-122–Thr-128.

It belongs to the bacterial CoaD family. As to quaternary structure, homohexamer. Mg(2+) serves as cofactor.

The protein resides in the cytoplasm. It catalyses the reaction (R)-4'-phosphopantetheine + ATP + H(+) = 3'-dephospho-CoA + diphosphate. It functions in the pathway cofactor biosynthesis; coenzyme A biosynthesis; CoA from (R)-pantothenate: step 4/5. Functionally, reversibly transfers an adenylyl group from ATP to 4'-phosphopantetheine, yielding dephospho-CoA (dPCoA) and pyrophosphate. The chain is Phosphopantetheine adenylyltransferase from Corynebacterium efficiens (strain DSM 44549 / YS-314 / AJ 12310 / JCM 11189 / NBRC 100395).